Consider the following 34-residue polypeptide: Photosystem II reaction center protein T (34 aa).

The chain crosses the membrane as a helical span at residues 3 to 23 (ALVYTFLLVGTLGIIFFAIFF).

This sequence belongs to the PsbT family. In terms of assembly, PSII is composed of 1 copy each of membrane proteins PsbA, PsbB, PsbC, PsbD, PsbE, PsbF, PsbH, PsbI, PsbJ, PsbK, PsbL, PsbM, PsbT, PsbY, PsbZ, Psb30/Ycf12, at least 3 peripheral proteins of the oxygen-evolving complex and a large number of cofactors. It forms dimeric complexes.

The protein resides in the plastid. Its subcellular location is the chloroplast thylakoid membrane. Its function is as follows. Found at the monomer-monomer interface of the photosystem II (PS II) dimer, plays a role in assembly and dimerization of PSII. PSII is a light-driven water plastoquinone oxidoreductase, using light energy to abstract electrons from H(2)O, generating a proton gradient subsequently used for ATP formation. This is Photosystem II reaction center protein T from Klebsormidium bilatum (Filamentous green alga).